The primary structure comprises 100 residues: Co-chaperonin GroES (100 aa).

Belongs to the GroES chaperonin family. In terms of assembly, heptamer of 7 subunits arranged in a ring. Interacts with the chaperonin GroEL.

Its subcellular location is the cytoplasm. In terms of biological role, together with the chaperonin GroEL, plays an essential role in assisting protein folding. The GroEL-GroES system forms a nano-cage that allows encapsulation of the non-native substrate proteins and provides a physical environment optimized to promote and accelerate protein folding. GroES binds to the apical surface of the GroEL ring, thereby capping the opening of the GroEL channel. The polypeptide is Co-chaperonin GroES (Mycobacterium marinum (strain ATCC BAA-535 / M)).